The sequence spans 338 residues: MEMO1 family protein MHO1 (338 aa).

The protein belongs to the MEMO1 family.

The protein resides in the cytoplasm. It localises to the nucleus. Functionally, plays a role in haploid invasive growth under conditions of nutrient insufficiency, suggesting that the function of the MEMO1 family in cell motility/invasion is conserved across species. This chain is MEMO1 family protein MHO1, found in Saccharomyces cerevisiae (strain ATCC 204508 / S288c) (Baker's yeast).